We begin with the raw amino-acid sequence, 482 residues long: Mannan endo-1,4-beta-mannosidase (482 aa).

Residues 1 to 21 (MARTLRYLLCGILALAAGSNA) form the signal peptide. Residues 42 to 160 (TTYEAEDAIL…WYLVDSITLT (119 aa)) form the CBM6 domain. 2 N-linked (GlcNAc...) asparagine glycosylation sites follow: Asn-171 and Asn-300. A GH26 domain is found at 181-474 (ASARALYDYL…YTSDYVLTLD (294 aa)). Glu-332 (proton donor) is an active-site residue. Residue Glu-422 is the Nucleophile of the active site.

The protein belongs to the glycosyl hydrolase 26 family.

It localises to the secreted. With respect to regulation, the activity is completely impaired by Ag(+), partially inhibited by Zn(2+), and enhanced by Co(2+), Ni(2+) and Cu(2+) by 22.6, 14.5 and 20.8 %, respectively. Ca(2+), Na(+), Mg(2+), Mn(2+), urea and EDTA do not significantly affect the mannanase activity. In terms of biological role, mannan endo-1,4-beta-mannosidase that exhibits high activity against konjac glucomannan and carob galactomannan, as well as a lower activity toward beta-mannan. Shows no activity against barley beta-glucan, birchwood xylan, and low viscosity carboxymethyl cellulose (CMC). Has the ability to hydrolyze manno-oligosaccharides such as M4 which is degraded slightly to M3 and M1, M5 which is mainly degraded to M4 and M1, and M6 which is mostly hydrolyzed to M4 and M2. Shows no activity toward M2 and M3 manno-oligosaccharides. This Thermothelomyces thermophilus (strain ATCC 42464 / BCRC 31852 / DSM 1799) (Sporotrichum thermophile) protein is Mannan endo-1,4-beta-mannosidase.